The primary structure comprises 74 residues: Anionic peptide clone 10 (74 aa).

An N-terminal signal peptide occupies residues 1–24 (MVSKSLIVLLLVSVLVSTFFTTEA).

Belongs to the non-disulfide-bridged peptide (NDBP) superfamily. Long chain multifunctional peptide (group 2) family. Expressed by the venom gland.

It is found in the secreted. May be an antimicrobial peptide. This chain is Anionic peptide clone 10, found in Tityus costatus (Brazilian scorpion).